Consider the following 365-residue polypeptide: Probable L-tyrosine/L-aspartate decarboxylase (365 aa).

The residue at position 224 (Lys-224) is an N6-(pyridoxal phosphate)lysine.

The protein belongs to the group II decarboxylase family. MfnA subfamily. Pyridoxal 5'-phosphate is required as a cofactor.

The enzyme catalyses L-tyrosine + H(+) = tyramine + CO2. It carries out the reaction L-aspartate + H(+) = beta-alanine + CO2. It participates in cofactor biosynthesis; methanofuran biosynthesis. The protein operates within cofactor biosynthesis; coenzyme A biosynthesis. Catalyzes the decarboxylation of L-tyrosine to produce tyramine for methanofuran biosynthesis. Can also catalyze the decarboxylation of L-aspartate to produce beta-alanine for coenzyme A (CoA) biosynthesis. The polypeptide is Probable L-tyrosine/L-aspartate decarboxylase (Methanoregula boonei (strain DSM 21154 / JCM 14090 / 6A8)).